The chain runs to 378 residues: Putative zinc finger protein 302L (378 aa).

Residues 3–25 form a C2H2-type; degenerate zinc finger; that stretch reads IVCEFCDKSFDSKSKVNAHQRTK.

It belongs to the IIV-6 302L family.

This chain is Putative zinc finger protein 302L, found in Invertebrate iridescent virus 6 (IIV-6).